The following is a 58-amino-acid chain: Ranakinin-N (58 aa).

An N-terminal signal peptide occupies residues 1-22 (MFTMKKSLLLLFFLGTISMSLC). A propeptide spanning residues 23–43 (EEKRDADEEETEGEAKMEDIK) is cleaved from the precursor. Positions 25-58 (KRDADEEETEGEAKMEDIKRAEAVPPGFTPFRKP) are disordered. The segment covering 35 to 46 (GEAKMEDIKRAE) has biased composition (basic and acidic residues).

In terms of tissue distribution, expressed by the skin glands.

The protein resides in the secreted. Functionally, induces contraction of intestinal smooth muscle in isolated guinea pig ileum. May induce relaxation of arterial smooth muscle. May target bradykinin receptors (BDKRB). Lacks antibacterial activity against the Gram-positive bacterium S.aureus and the Gram-negative bacteria E.coli and B.dysenteria, and antifungal activity against C.albicans. This Hylarana nigrovittata (Black-striped frog) protein is Ranakinin-N.